The primary structure comprises 59 residues: Large ribosomal subunit protein uL30 (59 aa).

Belongs to the universal ribosomal protein uL30 family. As to quaternary structure, part of the 50S ribosomal subunit.

This is Large ribosomal subunit protein uL30 from Leptospira biflexa serovar Patoc (strain Patoc 1 / ATCC 23582 / Paris).